Here is a 313-residue protein sequence, read N- to C-terminus: HTH-type transcriptional regulator CbbR (313 aa).

The HTH lysR-type domain occupies 1–61 (MRNVTFRQLR…DRTRGGMVPT (61 aa)). A DNA-binding region (H-T-H motif) is located at residues 21–40 (INLAAEALGLTGPALTLQIQ).

This sequence belongs to the LysR transcriptional regulatory family.

Its function is as follows. Transcriptional activator for the cbb operon for RuBisCO and other Calvin cycle genes. The protein is HTH-type transcriptional regulator CbbR (cbbR) of Rhizobium meliloti (strain 1021) (Ensifer meliloti).